The following is a 492-amino-acid chain: RNase aCSPSF2 (492 aa).

A divalent metal cation contacts are provided by His130, His132, Asp134, His135, His213, Asp234, and His460.

It belongs to the metallo-beta-lactamase superfamily. RNA-metabolizing metallo-beta-lactamase-like family. Mg(2+) serves as cofactor.

A 5'-3' exoribonuclease, more active on 5'-monophosphorylated and 5'-hydroxylated RNA than 5'-tri-phosphorylated RNA; note there is no evidence for accumulation of 5'-monophosphorylated RNA in this organism. Translation initiation factor 2 subunit gamma but not subunit alpha protects 5'-tri-phosphorylated RNA from degradation by this enzyme. The sequence is that of RNase aCSPSF2 from Saccharolobus solfataricus (strain ATCC 35092 / DSM 1617 / JCM 11322 / P2) (Sulfolobus solfataricus).